The following is a 225-amino-acid chain: UPF0758 protein Shewmr4_3597 (225 aa).

Positions 102–224 (VLTNPDLTRD…IVSFAERGWI (123 aa)) constitute an MPN domain. Residues His-173, His-175, and Asp-186 each coordinate Zn(2+). Positions 173 to 186 (HNHPSGIAEPSQAD) match the JAMM motif motif.

This sequence belongs to the UPF0758 family.

This chain is UPF0758 protein Shewmr4_3597, found in Shewanella sp. (strain MR-4).